Consider the following 1114-residue polypeptide: OTU domain-containing protein 4 (1114 aa).

An N-acetylmethionine modification is found at Met-1. Residues 1 to 22 (MEAAVGVPDGGDQGGAGPREDA) are disordered. Positions 8–17 (PDGGDQGGAG) are enriched in gly residues. Positions 34–155 (LYRKLVAKDG…GNHYDIVYPI (122 aa)) constitute an OTU domain. Positions 39 to 45 (VAKDGSC) are cys-loop. Asp-42 is an active-site residue. The active-site Nucleophile is Cys-45. The variable-loop stretch occupies residues 94-104 (LENPQEWVGQV). Position 120 is a phosphotyrosine (Tyr-120). A phosphoserine mark is found at Ser-126 and Ser-128. Thr-131 bears the Phosphothreonine mark. The his-loop stretch occupies residues 143-148 (FSNGNH). His-148 is an active-site residue. Phosphoserine occurs at positions 166, 199, 202, 204, and 341. The disordered stretch occupies residues 323–449 (KHTSKNLKAP…FGLSPEERRE (127 aa)). Over residues 392-404 (FSSHSSGSQSQKF) the composition is skewed to low complexity. The span at 420-435 (RKPDRERVEDFDHTSR) shows a compositional bias: basic and acidic residues. Residue Tyr-439 is modified to Phosphotyrosine. The residue at position 443 (Ser-443) is a Phosphoserine. Phosphotyrosine is present on Tyr-460. A disordered region spans residues 472–567 (ALSSSSVNQS…PAEQKPAEHV (96 aa)). Over residues 474 to 487 (SSSSVNQSASQSSN) the composition is skewed to low complexity. The segment covering 496–529 (HVGDRKGSRRRMDTEERKDKDSIHGHSQLDKRPE) has biased composition (basic and acidic residues). Residues Ser-546, Ser-893, and Ser-900 each carry the phosphoserine modification. Residues 911–1114 (EFPEARGEHV…MGDGHRGQHT (204 aa)) are disordered. 2 stretches are compositionally biased toward basic and acidic residues: residues 913–922 (PEARGEHVHS) and 969–1000 (NRER…DPKT). 5 positions are modified to phosphoserine: Ser-1006, Ser-1011, Ser-1014, Ser-1023, and Ser-1024. The span at 1039-1048 (SKQFYNQTYG) shows a compositional bias: polar residues. Ser-1049 carries the post-translational modification Phosphoserine. Composition is skewed to basic and acidic residues over residues 1067-1086 (VRSE…EGYQ) and 1096-1114 (FRGD…GQHT).

As to quaternary structure, interacts with MYD88; the interaction is direct. Interacts with ALKBH3; the interaction is direct. Interacts with USP7; the interaction is direct. Interacts with USP9X; the interaction is direct. Phosphorylated on Ser-202 and Ser-204 likely by CSNK2A1-CSNK2A2 serine/threonine-protein kinase complex. Activates 'Lys-63'-specific deubiquitinase activity.

Its subcellular location is the cytoplasm. The protein resides in the nucleus. It catalyses the reaction Thiol-dependent hydrolysis of ester, thioester, amide, peptide and isopeptide bonds formed by the C-terminal Gly of ubiquitin (a 76-residue protein attached to proteins as an intracellular targeting signal).. Phosphorylation on Ser-202 and Ser-204 induces 'Lys-63'-specific deubiquitinase activity. Functionally, deubiquitinase which hydrolyzes the isopeptide bond between the ubiquitin C-terminus and the lysine epsilon-amino group of the target protein. May negatively regulate inflammatory and pathogen recognition signaling in innate immune response. Upon phosphorylation at Ser-202 and Ser-204 residues, via IL-1 receptor and Toll-like receptor signaling pathway, specifically deubiquitinates 'Lys-63'-polyubiquitinated MYD88 adapter protein triggering down-regulation of NF-kappa-B-dependent transcription of inflammatory mediators. Independently of the catalytic activity, acts as a scaffold for alternative deubiquitinases to assemble specific deubiquitinase-substrate complexes. Associates with USP7 and USP9X deubiquitinases to stabilize alkylation repair enzyme ALKBH3, thereby promoting the repair of alkylated DNA lesions. This chain is OTU domain-containing protein 4, found in Homo sapiens (Human).